The following is a 94-amino-acid chain: Integration host factor subunit beta (94 aa).

This sequence belongs to the bacterial histone-like protein family. In terms of assembly, heterodimer of an alpha and a beta chain.

This protein is one of the two subunits of integration host factor, a specific DNA-binding protein that functions in genetic recombination as well as in transcriptional and translational control. The polypeptide is Integration host factor subunit beta (Escherichia coli O127:H6 (strain E2348/69 / EPEC)).